Here is a 203-residue protein sequence, read N- to C-terminus: Acid phosphatase (203 aa).

Catalysis depends on His-13, which acts as the Tele-phosphohistidine intermediate. Residue Glu-85 is the Proton donor/acceptor of the active site.

This sequence belongs to the phosphoglycerate mutase family. In terms of assembly, homodimer.

The enzyme catalyses a phosphate monoester + H2O = an alcohol + phosphate. It carries out the reaction beta-D-fructose 1,6-bisphosphate + H2O = beta-D-fructose 6-phosphate + phosphate. It functions in the pathway carbohydrate biosynthesis; gluconeogenesis. Its activity is regulated as follows. In contrast to classical FBPases, is resistant to inhibition by lithium. Phosphatase with a broad specificity. Can dephosphorylate a variety of substrates including phosphorylated sugars like fructose-6-phosphate (F6P). Is able to function in vivo as a fructose-1,6-bisphosphatase (FBPase) and to maintain gluconeogenesis when the classical FBPase GlpX is absent. Shows negligible phosphoglycerate mutase activity. Has no phosphatase activity against 3-phosphoglycerate, 2,3-bisphosphoglycerate, or hydrophobic substrates such as alpha-napthyl phosphate. The protein is Acid phosphatase of Mycobacterium tuberculosis (strain ATCC 25618 / H37Rv).